Here is a 235-residue protein sequence, read N- to C-terminus: Probable septum site-determining protein MinC (235 aa).

The tract at residues 104–125 is disordered; that stretch reads KAVRPAPVEPATPSEPPQNANP. Pro residues predominate over residues 110-119; sequence PVEPATPSEP.

It belongs to the MinC family. Interacts with MinD and FtsZ.

Functionally, cell division inhibitor that blocks the formation of polar Z ring septums. Rapidly oscillates between the poles of the cell to destabilize FtsZ filaments that have formed before they mature into polar Z rings. Prevents FtsZ polymerization. The protein is Probable septum site-determining protein MinC of Salmonella enteritidis PT4 (strain P125109).